Consider the following 283-residue polypeptide: Para-Rep C7 (283 aa).

Residues 3 to 96 form the CRESS-DNA virus Rep endonuclease domain; the sequence is SIRATHWCFT…IAGPWEYGTW (94 aa). Positions 10-13 match the RCR-1 motif; the sequence is CFTL. A divalent metal cation-binding residues include glutamate 36 and histidine 42. Residues 42 to 44 carry the RCR-2 motif; the sequence is HLQ. A Nuclear localization signal motif is present at residues 51 to 71; that stretch reads KHVTLKKMKELLPGAHLEMAK. The active-site For DNA cleavage activity is tyrosine 79. An RCR-3 motif is present at residues 79–82; it reads YCQK. Glutamate 84 lines the a divalent metal cation pocket. A Nuclear localization signal motif is present at residues 96-102; that stretch reads WISSGSH. 178–180 contributes to the ATP binding site; the sequence is GKS.

The protein belongs to the nanoviridea/circoviridae replication-associated protein family. In terms of assembly, homooligomer (Potential). Rep binds to repeated DNA motifs (iterons). It depends on Mg(2+) as a cofactor. Mn(2+) is required as a cofactor.

The protein localises to the host nucleus. It catalyses the reaction ATP + H2O = ADP + phosphate + H(+). Its function is as follows. Initiates and terminates the replication only of its own subviral DNA molecule. The closed circular ssDNA genome is first converted to a superhelical dsDNA. Rep binds a specific hairpin at the genome origin of replication. Introduces an endonucleolytic nick within the intergenic region of the genome, thereby initiating the rolling circle replication (RCR). Following cleavage, binds covalently to the 5'-phosphate of DNA as a tyrosyl ester. The cleavage gives rise to a free 3'-OH that serves as a primer for the cellular DNA polymerase. The polymerase synthesizes the (+) strand DNA by rolling circle mechanism. After one round of replication, a Rep-catalyzed nucleotidyl transfer reaction releases a circular single-stranded virus genome, thereby terminating the replication. Displays origin-specific DNA cleavage, nucleotidyl transferase, ATPase and helicase activities. The protein is Para-Rep C7 (C7) of Faba bean necrotic yellows C7 alphasatellite (FBNYC7A).